We begin with the raw amino-acid sequence, 1021 residues long: INO80 complex subunit D (1021 aa).

K87 participates in a covalent cross-link: Glycyl lysine isopeptide (Lys-Gly) (interchain with G-Cter in SUMO2). Phosphoserine is present on S132. Disordered stretches follow at residues 194–239 (FSTP…PMQG), 514–570 (RGDN…SMPT), 808–844 (RQQYSSDHSHSSPHGSHYDSEHVPSPYSDHITSPHTS), 911–940 (SLSTPPTTSNSETTQPAFATVTPSSSSVLP), and 976–1021 (QLSS…PSPN). A compositionally biased stretch (polar residues) spans 224–239 (VCKSPQPQNTSLPMQG). Over residues 520–554 (KVQHQQQRKPRKKTKPPALTKKHKKKRRRGPRRPQ) the composition is skewed to basic residues. Positions 911–926 (SLSTPPTTSNSETTQP) are enriched in low complexity. Over residues 931 to 940 (VTPSSSSVLP) the composition is skewed to polar residues. Residues 995–1014 (APPTGFTATGATATSTNNAS) are compositionally biased toward low complexity.

The protein belongs to the INO80D family. As to quaternary structure, component of the chromatin remodeling INO80 complex; specifically part of a complex module associated with the N-terminus of INO80.

It localises to the nucleus. In terms of biological role, putative regulatory component of the chromatin remodeling INO80 complex which is involved in transcriptional regulation, DNA replication and probably DNA repair. This Mus musculus (Mouse) protein is INO80 complex subunit D.